The following is a 179-amino-acid chain: Large ribosomal subunit protein uL6 (179 aa).

This sequence belongs to the universal ribosomal protein uL6 family. Part of the 50S ribosomal subunit.

This protein binds to the 23S rRNA, and is important in its secondary structure. It is located near the subunit interface in the base of the L7/L12 stalk, and near the tRNA binding site of the peptidyltransferase center. In Prochlorococcus marinus (strain MIT 9313), this protein is Large ribosomal subunit protein uL6.